Reading from the N-terminus, the 118-residue chain is Ribonuclease P protein component (118 aa).

The protein belongs to the RnpA family. Consists of a catalytic RNA component (M1 or rnpB) and a protein subunit.

It catalyses the reaction Endonucleolytic cleavage of RNA, removing 5'-extranucleotides from tRNA precursor.. RNaseP catalyzes the removal of the 5'-leader sequence from pre-tRNA to produce the mature 5'-terminus. It can also cleave other RNA substrates such as 4.5S RNA. The protein component plays an auxiliary but essential role in vivo by binding to the 5'-leader sequence and broadening the substrate specificity of the ribozyme. In Enterococcus faecalis (strain ATCC 700802 / V583), this protein is Ribonuclease P protein component.